The primary structure comprises 149 residues: Deoxyuridine 5'-triphosphate nucleotidohydrolase (149 aa).

Residues 70–72 (RSG), Asn-83, and 87–89 (LID) each bind substrate.

This sequence belongs to the dUTPase family. It depends on Mg(2+) as a cofactor.

It catalyses the reaction dUTP + H2O = dUMP + diphosphate + H(+). It functions in the pathway pyrimidine metabolism; dUMP biosynthesis; dUMP from dCTP (dUTP route): step 2/2. This enzyme is involved in nucleotide metabolism: it produces dUMP, the immediate precursor of thymidine nucleotides and it decreases the intracellular concentration of dUTP so that uracil cannot be incorporated into DNA. The protein is Deoxyuridine 5'-triphosphate nucleotidohydrolase of Blochmanniella pennsylvanica (strain BPEN).